The chain runs to 2473 residues: Neurogenic locus notch homolog protein 2 (2473 aa).

Residues 1 to 25 (MPALRPAALRALLWLWLCGAGPAHA) form the signal peptide. 4 consecutive EGF-like domains span residues 26-63 (LQCR…EYCQ), 64-102 (HRDP…EDCQ), 105-143 (TSHP…KQCQ), and 144-180 (WTDA…QKCE). Over 26–1679 (LQCRGGQEPC…SELESPRNAQ (1654 aa)) the chain is Extracellular. Cystine bridges form between Cys-28-Cys-41, Cys-35-Cys-51, Cys-53-Cys-62, Cys-68-Cys-79, Cys-73-Cys-90, Cys-92-Cys-101, Cys-109-Cys-121, Cys-115-Cys-131, Cys-133-Cys-142, Cys-148-Cys-159, Cys-153-Cys-168, Cys-170-Cys-179, Cys-186-Cys-198, Cys-192-Cys-207, Cys-209-Cys-218, Cys-230-Cys-246, Cys-248-Cys-257, Cys-264-Cys-275, Cys-269-Cys-284, Cys-286-Cys-295, Cys-302-Cys-315, Cys-309-Cys-324, Cys-326-Cys-335, Cys-342-Cys-353, Cys-347-Cys-362, Cys-364-Cys-373, Cys-379-Cys-390, Cys-384-Cys-401, Cys-403-Cys-412, Cys-419-Cys-433, Cys-427-Cys-442, Cys-444-Cys-453, Cys-460-Cys-471, Cys-465-Cys-480, Cys-482-Cys-491, Cys-498-Cys-509, Cys-503-Cys-518, Cys-520-Cys-529, Cys-536-Cys-547, Cys-541-Cys-556, Cys-558-Cys-567, Cys-574-Cys-584, Cys-579-Cys-593, Cys-595-Cys-604, Cys-611-Cys-622, Cys-616-Cys-631, Cys-633-Cys-642, Cys-649-Cys-659, Cys-654-Cys-668, Cys-670-Cys-679, Cys-686-Cys-697, Cys-691-Cys-706, Cys-708-Cys-717, Cys-724-Cys-734, Cys-729-Cys-743, Cys-745-Cys-754, Cys-761-Cys-772, Cys-766-Cys-781, Cys-783-Cys-792, Cys-799-Cys-810, Cys-804-Cys-819, Cys-821-Cys-830, Cys-837-Cys-848, Cys-842-Cys-859, Cys-861-Cys-870, Cys-877-Cys-888, Cys-882-Cys-897, Cys-899-Cys-908, Cys-915-Cys-926, Cys-920-Cys-935, Cys-937-Cys-946, Cys-953-Cys-964, Cys-958-Cys-973, Cys-975-Cys-984, Cys-991-Cys-1002, Cys-996-Cys-1011, Cys-1013-Cys-1022, Cys-1029-Cys-1040, Cys-1034-Cys-1049, Cys-1051-Cys-1060, Cys-1067-Cys-1078, Cys-1072-Cys-1087, and Cys-1089-Cys-1098. N-linked (GlcNAc...) asparagine glycosylation occurs at Asn-46. A glycan (N-linked (GlcNAc...) asparagine) is linked at Asn-155. One can recognise an EGF-like 5; calcium-binding domain in the interval 182–219 (DINECDIPGRCQHGGTCLNLPGSYRCQCPQGFTGQHCD). The EGF-like 6; incomplete domain occupies 221–258 (PYVPCAPSPCVNGGTCRQTGDFTFECNCLPGFEGSTCE). One can recognise an EGF-like 7; calcium-binding domain in the interval 260–296 (NIDDCPNHKCQNGGVCVDGVNTYNCRCPPQWTGQFCT). An EGF-like 8; calcium-binding domain is found at 298–336 (DVDECLLQPNACQNGGTCTNRNGGYGCVCVNGWSGDDCS). Residues 338-374 (NIDDCAYASCTPGSTCIDRVASFSCLCPEGKAGLLCH) enclose the EGF-like 9; calcium-binding domain. The 39-residue stretch at 375 to 413 (LDDACISNPCHKGALCDTNPLNGQYICTCPQGYKGADCT) folds into the EGF-like 10 domain. In terms of domain architecture, EGF-like 11; calcium-binding spans 415–454 (DVDECAMANSNPCEHAGKCVNTDGAFHCECLKGYAGPRCE). The EGF-like 12; calcium-binding domain occupies 456–492 (DINECHSDPCQNDATCLDKIGGFTCLCMPGFKGVHCE). The 37-residue stretch at 494 to 530 (EVNECQSNPCVNNGQCVDKVNRFQCLCPPGFTGPVCQ) folds into the EGF-like 13; calcium-binding domain. An EGF-like 14; calcium-binding domain is found at 532 to 568 (DIDDCSSTPCLNGAKCIDHPNGYECQCATGFTGILCD). Positions 570–605 (NIDNCDPDPCHHGQCQDGIDSYTCICNPGYMGAICS) constitute an EGF-like 15; calcium-binding domain. One can recognise an EGF-like 16; calcium-binding domain in the interval 607 to 643 (QIDECYSSPCLNDGRCIDLVNGYQCNCQPGTSGLNCE). Ser-613 carries an O-linked (Glc...) serine; alternate glycan. Ser-613 is a glycosylation site (O-linked (Xyl...) serine; alternate). Positions 645-680 (NFDDCASNPCMHGVCVDGINRYSCVCSPGFTGQRCN) constitute an EGF-like 17; calcium-binding domain. The EGF-like 18; calcium-binding domain maps to 682–718 (DIDECASNPCRKGATCINDVNGFRCICPEGPHHPSCY). One can recognise an EGF-like 19 domain in the interval 720–755 (QVNECLSNPCIHGNCTGGLSGYKCLCDAGWVGVNCE). A glycan (N-linked (GlcNAc...) asparagine) is linked at Asn-733. Residues 757 to 793 (DKNECLSNPCQNGGTCNNLVNGYRCTCKKGFKGYNCQ) enclose the EGF-like 20; calcium-binding domain. The EGF-like 21; calcium-binding domain maps to 795 to 831 (NIDECASNPCLNQGTCFDDVSGYTCHCMLPYTGKNCQ). Residues 833 to 871 (VLAPCSPNPCENAAVCKEAPNFESFSCLCAPGWQGKRCT) enclose the EGF-like 22 domain. The EGF-like 23; calcium-binding domain occupies 873 to 909 (DVDECISKPCMNNGVCHNTQGSYVCECPPGFSGMDCE). An EGF-like 24; calcium-binding domain is found at 911–947 (DINDCLANPCQNGGSCVDHVNTFSCQCHPGFIGDKCQ). One can recognise an EGF-like 25; calcium-binding domain in the interval 949 to 985 (DMNECLSEPCKNGGTCSDYVNSYTCTCPAGFHGVHCE). The EGF-like 26; calcium-binding domain occupies 987-1023 (NIDECTESSCFNGGTCVDGINSFSCLCPVGFTGPFCL). Residues 1025–1061 (DINECSSNPCLNAGTCVDGLGTYRCICPLGYTGKNCQ) enclose the EGF-like 27; calcium-binding domain. 2 consecutive EGF-like domains span residues 1063 to 1099 (LVNL…AYCD) and 1101 to 1147 (LNVS…SYCE). N-linked (GlcNAc...) asparagine glycosylation occurs at Asn-1102. 24 disulfides stabilise this stretch: Cys-1105-Cys-1126, Cys-1120-Cys-1135, Cys-1137-Cys-1146, Cys-1153-Cys-1164, Cys-1158-Cys-1173, Cys-1175-Cys-1184, Cys-1191-Cys-1202, Cys-1196-Cys-1211, Cys-1213-Cys-1222, Cys-1229-Cys-1241, Cys-1235-Cys-1250, Cys-1252-Cys-1261, Cys-1268-Cys-1281, Cys-1273-Cys-1290, Cys-1292-Cys-1301, Cys-1308-Cys-1319, Cys-1313-Cys-1331, Cys-1333-Cys-1346, Cys-1378-Cys-1389, Cys-1383-Cys-1400, Cys-1402-Cys-1411, Cys-1425-Cys-1448, Cys-1430-Cys-1443, and Cys-1439-Cys-1455. Residues 1149 to 1185 (QLDECASNPCQHGATCNDFIGGYRCECVPGYQGVNCE) form the EGF-like 30; calcium-binding domain. Residues 1187 to 1223 (EVDECQNQPCQNGGTCIDLVNHFKCSCPPGTRGLLCE) enclose the EGF-like 31; calcium-binding domain. Positions 1225 to 1262 (NIDECAGGPHCLNGGQCVDRIGGYTCRCLPGFAGERCE) constitute an EGF-like 32; calcium-binding domain. EGF-like domains follow at residues 1264–1302 (DINE…RHCE), 1304–1343 (FLDV…ARCQ), and 1375–1412 (ESGC…SHCE). LNR repeat units follow at residues 1425 to 1465 (CQSQ…PWAN), 1466 to 1502 (CTST…NSKT), and 1503 to 1544 (CKYD…NLAE). A negative regulatory region (NRR) region spans residues 1425–1679 (CQSQYCADKA…SELESPRNAQ (255 aa)). N-linked (GlcNAc...) asparagine glycosylation occurs at Asn-1465. 7 cysteine pairs are disulfide-bonded: Cys-1466-Cys-1489, Cys-1472-Cys-1484, Cys-1480-Cys-1496, Cys-1503-Cys-1527, Cys-1509-Cys-1522, Cys-1518-Cys-1534, and Cys-1634-Cys-1641. Residues 1680–1700 (LLYLLAVAVVIILFFILLGVI) form a helical membrane-spanning segment. Over 1701 to 2473 (MAKRKRKHGF…PPHSNMQVYA (773 aa)) the chain is Cytoplasmic. At Thr-1718 the chain carries Phosphothreonine. A disordered region spans residues 1755-1778 (GTSEHWVDDEGPQPKKAKAEDEAL). Ser-1780 bears the Phosphoserine mark. Thr-1803 carries the post-translational modification Phosphothreonine. Ser-1805 carries the post-translational modification Phosphoserine. At Thr-1809 the chain carries Phosphothreonine. ANK repeat units follow at residues 1828 to 1872 (DGCT…SLQA), 1877 to 1906 (TGEM…DANA), 1910 to 1940 (MGRC…DLDA), 1944 to 1973 (DGTT…DVNA), 1977 to 2006 (HGKS…NRDM), and 2010 to 2039 (KEET…NRDI). Phosphoserine is present on residues Ser-1843 and Ser-1846. Phosphoserine is present on residues Ser-2071, Ser-2079, and Ser-2082. Thr-2098 is subject to Phosphothreonine. Disordered regions lie at residues 2098-2117 (TPMG…PTSL), 2122-2169 (KEAK…TSSP), and 2382-2473 (VGKY…QVYA). Positions 2099-2108 (PMGKKARRPN) are enriched in basic residues. Polar residues-rich tracts occupy residues 2140 to 2151 (VQLSESSVTLSP) and 2390 to 2400 (SQHSYASSNAA). Over residues 2419 to 2446 (PSPESPDQWSSSSPHSASDWSDVTTSPT) the composition is skewed to low complexity. Residues 2447–2456 (PGGGGGGQRG) show a composition bias toward gly residues.

It belongs to the NOTCH family. As to quaternary structure, heterodimer of a C-terminal fragment N(TM) and an N-terminal fragment N(EC) which are probably linked by disulfide bonds. Interacts with MAML1, MAML2 and MAML3 which act as transcriptional coactivators for NOTCH2. Interacts with RELA/p65. Interacts with HIF1AN. Interacts (via ANK repeats) with TCIM, the interaction inhibits the nuclear translocation of NOTCH2 N2ICD. Interacts with CUL1, RBX1, SKP1 and FBXW7 that are SCF(FBXW7) E3 ubiquitin-protein ligase complex components. Interacts with MINAR1; this interaction increases MINAR1 stability and function. Interacts with MDK; this interaction mediates a nuclear accumulation of NOTCH2 and therefore activation of NOTCH2 signaling leading to interaction between HES1 and STAT3. Interacts with MINAR2. In terms of processing, synthesized in the endoplasmic reticulum as an inactive form which is proteolytically cleaved by a furin-like convertase in the trans-Golgi network before it reaches the plasma membrane to yield an active, ligand-accessible form. Cleavage results in a C-terminal fragment N(TM) and a N-terminal fragment N(EC). Following ligand binding, it is cleaved by TNF-alpha converting enzyme (TACE) to yield a membrane-associated intermediate fragment called notch extracellular truncation (NEXT). This fragment is then cleaved by presenilin dependent gamma-secretase to release a notch-derived peptide containing the intracellular domain (NICD) from the membrane. Post-translationally, hydroxylated by HIF1AN. Can be either O-glucosylated or O-xylosylated at Ser-613 by POGLUT1. In terms of processing, phosphorylated by GSK3. GSK3-mediated phosphorylation is necessary for NOTCH2 recognition by FBXW7, ubiquitination and degradation via the ubiquitin proteasome pathway. In terms of tissue distribution, expressed in the brain, liver, kidney, neuroepithelia, somites, optic vesicles and branchial arches, but not heart.

It is found in the cell membrane. Its subcellular location is the nucleus. It localises to the cytoplasm. In terms of biological role, functions as a receptor for membrane-bound ligands Jagged-1 (JAG1), Jagged-2 (JAG2) and Delta-1 (DLL1) to regulate cell-fate determination. Upon ligand activation through the released notch intracellular domain (NICD) it forms a transcriptional activator complex with RBPJ/RBPSUH and activates genes of the enhancer of split locus. Affects the implementation of differentiation, proliferation and apoptotic programs. May play an essential role in postimplantation development, probably in some aspect of cell specification and/or differentiation. In collaboration with RELA/p65 enhances NFATc1 promoter activity and positively regulates RANKL-induced osteoclast differentiation. Positively regulates self-renewal of liver cancer cells. The sequence is that of Neurogenic locus notch homolog protein 2 from Mus musculus (Mouse).